The following is a 456-amino-acid chain: Glycerol-3-phosphate acyltransferase 4 (456 aa).

A signal peptide spans Met1–Gly37. 2 consecutive transmembrane segments (helical) span residues Ile156–Leu176 and Ile180–Leu200. N-linked (GlcNAc...) asparagine glycosylation occurs at Asn247. The HXXXXD motif motif lies at His248–Asp253. Asn327, Asn328, and Asn362 each carry an N-linked (GlcNAc...) asparagine glycan.

It belongs to the 1-acyl-sn-glycerol-3-phosphate acyltransferase family. Ubiquitous. High levels in testis. Relatively high level of expression in skeletal muscle and heart. Relatively low level of expression in lung.

It is found in the endoplasmic reticulum membrane. It catalyses the reaction sn-glycerol 3-phosphate + an acyl-CoA = a 1-acyl-sn-glycero-3-phosphate + CoA. The enzyme catalyses dodecanoyl-CoA + sn-glycerol 3-phosphate = 1-dodecanoyl-sn-glycerol 3-phosphate + CoA. The catalysed reaction is sn-glycerol 3-phosphate + hexadecanoyl-CoA = 1-hexadecanoyl-sn-glycero-3-phosphate + CoA. It carries out the reaction sn-glycerol 3-phosphate + octadecanoyl-CoA = 1-octadecanoyl-sn-glycero-3-phosphate + CoA. It catalyses the reaction sn-glycerol 3-phosphate + (9Z)-octadecenoyl-CoA = 1-(9Z-octadecenoyl)-sn-glycero-3-phosphate + CoA. The enzyme catalyses (9Z,12Z)-octadecadienoyl-CoA + sn-glycerol 3-phosphate = 1-(9Z,12Z)-octadecadienoyl-sn-glycero-3-phosphate + CoA. The protein operates within phospholipid metabolism; CDP-diacylglycerol biosynthesis; CDP-diacylglycerol from sn-glycerol 3-phosphate: step 1/3. Its activity is regulated as follows. Inhibited by N-ethylmaleimide (NEM). Converts glycerol-3-phosphate to 1-acyl-sn-glycerol-3-phosphate (lysophosphatidic acid or LPA) by incorporating an acyl moiety at the sn-1 position of the glycerol backbone. Active against both saturated and unsaturated long-chain fatty acyl-CoAs. Protects cells against lipotoxicity. In Homo sapiens (Human), this protein is Glycerol-3-phosphate acyltransferase 4.